A 225-amino-acid chain; its full sequence is MNSIKFPVLDRTTTNSVISTTLNDLSNWSRLSSLWPLLYGTSCCFIEFASLIGSRFDFDRYGLVPRSSPRQADLILTAGTVTMKMAPSLVRLYEQMPEPKYVIAMGACTITGGMFSTDSYSTVRGVDKLIPVDVYLPGCPPKPEAVIDAITKLRKKIAREIYKDRIRPQQGNRCFTTNHKFFVVRSPHTGNYDQELLYPPSSTSEISTETFFKYKSPVSSHELVN.

Residues cysteine 43, cysteine 44, cysteine 108, and cysteine 139 each coordinate [4Fe-4S] cluster.

The protein belongs to the complex I 20 kDa subunit family. As to quaternary structure, NDH is composed of at least 16 different subunits, 5 of which are encoded in the nucleus. It depends on [4Fe-4S] cluster as a cofactor.

It localises to the plastid. Its subcellular location is the chloroplast thylakoid membrane. It carries out the reaction a plastoquinone + NADH + (n+1) H(+)(in) = a plastoquinol + NAD(+) + n H(+)(out). The catalysed reaction is a plastoquinone + NADPH + (n+1) H(+)(in) = a plastoquinol + NADP(+) + n H(+)(out). Its function is as follows. NDH shuttles electrons from NAD(P)H:plastoquinone, via FMN and iron-sulfur (Fe-S) centers, to quinones in the photosynthetic chain and possibly in a chloroplast respiratory chain. The immediate electron acceptor for the enzyme in this species is believed to be plastoquinone. Couples the redox reaction to proton translocation, and thus conserves the redox energy in a proton gradient. This chain is NAD(P)H-quinone oxidoreductase subunit K, chloroplastic, found in Lepidium virginicum (Virginia pepperweed).